Consider the following 537-residue polypeptide: MAWRGAGPSVPGAPGGVGLSLGLLLQLLLLLGPARGFGDEEERRCDPIRISMCQNLGYNVTKMPNLVGHELQTDAELQLTTFTPLIQYGCSSQLQFFLCSVYVPMCTEKINIPIGPCGGMCLSVKRRCEPVLKEFGFAWPESLNCSKFPPQNDHNHMCMEGPGDEEVPLPHKTPIQPGEECHSVGTNSDQYIWVKRSLNCVLKCGYDAGLYSRSAKEFTDIWMAVWASLCFISTAFTVLTFLIDSSRFSYPERPIIFLSMCYNIYSIAYIVRLTVGRERISCDFEEAAEPVLIQEGLKNTGCAIIFLLMYFFGMASSIWWVILTLTWFLAAGLKWGHEAIEMHSSYFHIAAWAIPAVKTIVILIMRLVDADELTGLCYVGNQNLDALTGFVVAPLFTYLVIGTLFIAAGLVALFKIRSNLQKDGTKTDKLERLMVKIGVFSVLYTVPATCVIACYFYEISNWALFRYSADDSNMAVEMLKIFMSLLVGITSGMWIWSAKTLHTWQKCSNRLVNSGKVKREKRGNGWVKPGKGSETVV.

The signal sequence occupies residues 1–36 (MAWRGAGPSVPGAPGGVGLSLGLLLQLLLLLGPARG). Topologically, residues 37–212 (FGDEEERRCD…KCGYDAGLYS (176 aa)) are extracellular. Residues 40–161 (EEERRCDPIR…NDHNHMCMEG (122 aa)) form the FZ domain. 8 disulfide bridges follow: Cys-45/Cys-106, Cys-53/Cys-99, Cys-90/Cys-128, Cys-117/Cys-158, Cys-121/Cys-145, Cys-181/Cys-200, Cys-204/Cys-282, and Cys-302/Cys-377. Asn-59 is a glycosylation site (N-linked (GlcNAc...) asparagine). An N-linked (GlcNAc...) asparagine glycan is attached at Asn-144. A helical membrane pass occupies residues 213 to 243 (RSAKEFTDIWMAVWASLCFISTAFTVLTFLI). The Cytoplasmic portion of the chain corresponds to 244–249 (DSSRFS). A helical transmembrane segment spans residues 250–275 (YPERPIIFLSMCYNIYSIAYIVRLTV). Residues 276-299 (GRERISCDFEEAAEPVLIQEGLKN) are Extracellular-facing. The chain crosses the membrane as a helical span at residues 300–333 (TGCAIIFLLMYFFGMASSIWWVILTLTWFLAAGL). Residues 334-336 (KWG) are Cytoplasmic-facing. Residues 337–365 (HEAIEMHSSYFHIAAWAIPAVKTIVILIM) traverse the membrane as a helical segment. Residues 366 to 383 (RLVDADELTGLCYVGNQN) are Extracellular-facing. Residues 384–418 (LDALTGFVVAPLFTYLVIGTLFIAAGLVALFKIRS) form a helical membrane-spanning segment. Topologically, residues 419–431 (NLQKDGTKTDKLE) are cytoplasmic. A helical transmembrane segment spans residues 432–460 (RLMVKIGVFSVLYTVPATCVIACYFYEIS). Residues 461 to 473 (NWALFRYSADDSN) lie on the Extracellular side of the membrane. The chain crosses the membrane as a helical span at residues 474 to 495 (MAVEMLKIFMSLLVGITSGMWI). Topologically, residues 496-537 (WSAKTLHTWQKCSNRLVNSGKVKREKRGNGWVKPGKGSETVV) are cytoplasmic. The Lys-Thr-X-X-X-Trp motif, mediates interaction with the PDZ domain of Dvl family members signature appears at 499–504 (KTLHTW). The PDZ-binding signature appears at 535-537 (TVV).

It belongs to the G-protein coupled receptor Fz/Smo family. As to quaternary structure, interacts with MAGI3 and NDP. Component of a complex, at least composed of TSPAN12, FZD4 and norrin (NDP). Interacts (via FZ domain) with TSKU; TSKU competes with WNT2B for binding to FZD4, inhibiting Wnt signaling and repressing peripheral eye development. Interacts with glypican GPC3. Ubiquitinated by ZNRF3, leading to its degradation by the proteasome. In terms of tissue distribution, almost ubiquitous. Largely expressed in adult heart, skeletal muscle, ovary, and fetal kidney. Moderate amounts in adult liver, kidney, pancreas, spleen, and fetal lung, and small amounts in placenta, adult lung, prostate, testis, colon, fetal brain and liver.

Its subcellular location is the cell membrane. In terms of biological role, receptor for Wnt proteins. Most frizzled receptors are coupled to the beta-catenin (CTNNB1) canonical signaling pathway, which leads to the activation of disheveled proteins, inhibition of GSK-3 kinase, nuclear accumulation of beta-catenin (CTNNB1) and activation of Wnt target genes. Plays a critical role in retinal vascularization by acting as a receptor for Wnt proteins and norrin (NDP). In retina, it can be activated by Wnt protein-binding and also by Wnt-independent signaling via binding of norrin (NDP), promoting in both cases beta-catenin (CTNNB1) accumulation and stimulation of LEF/TCF-mediated transcriptional programs. A second signaling pathway involving PKC and calcium fluxes has been seen for some family members, but it is not yet clear if it represents a distinct pathway or if it can be integrated in the canonical pathway, as PKC seems to be required for Wnt-mediated inactivation of GSK-3 kinase. Both pathways seem to involve interactions with G-proteins. May be involved in transduction and intercellular transmission of polarity information during tissue morphogenesis and/or in differentiated tissues. In Homo sapiens (Human), this protein is Frizzled-4 (FZD4).